The following is an 895-amino-acid chain: Probable inorganic carbon transporter subunit DabA 1 (895 aa).

Positions 398, 400, 581, and 596 each coordinate Zn(2+).

Belongs to the inorganic carbon transporter (TC 9.A.2) DabA family. In terms of assembly, forms a complex with DabB. Zn(2+) is required as a cofactor.

It is found in the cell inner membrane. In terms of biological role, part of an energy-coupled inorganic carbon pump. In Rhodopirellula baltica (strain DSM 10527 / NCIMB 13988 / SH1), this protein is Probable inorganic carbon transporter subunit DabA 1.